The chain runs to 1154 residues: Polyketide biosynthesis protein ThaF (1154 aa).

Residues methionine 330–valine 714 form an acyl transferase region. The segment at serine 627–alanine 689 is disordered. Residues alanine 641–proline 672 show a composition bias toward low complexity. The span at alanine 673–alanine 689 shows a compositional bias: pro residues.

It in the N-terminal section; belongs to the FabD family.

The protein localises to the cytoplasm. It catalyses the reaction holo-[ACP] + malonyl-CoA = malonyl-[ACP] + CoA. It participates in antibiotic biosynthesis. Its function is as follows. Involved in production of the polyketide antibiotic thailandamide. Probably has an acyl transferase activity and could also have a flavin mononucleotide-dependent oxidoreductase activity. In Burkholderia thailandensis (strain ATCC 700388 / DSM 13276 / CCUG 48851 / CIP 106301 / E264), this protein is Polyketide biosynthesis protein ThaF.